The sequence spans 487 residues: Cobyric acid synthase (487 aa).

The GATase cobBQ-type domain maps to 251–439; that stretch reads KLKVVAPAYP…CHGVLDHPEA (189 aa). The Nucleophile role is filled by Cys332. Residue His431 is part of the active site.

This sequence belongs to the CobB/CobQ family. CobQ subfamily.

Its pathway is cofactor biosynthesis; adenosylcobalamin biosynthesis. Functionally, catalyzes amidations at positions B, D, E, and G on adenosylcobyrinic A,C-diamide. NH(2) groups are provided by glutamine, and one molecule of ATP is hydrogenolyzed for each amidation. This chain is Cobyric acid synthase, found in Dechloromonas aromatica (strain RCB).